The primary structure comprises 80 residues: Beta-toxin KAaH2 (80 aa).

A signal peptide spans 1-22 (MMKLMLFSIIVILFSLIGSIHG). One can recognise an LCN-type CS-alpha/beta domain in the interval 25–80 (VPGNYPLDSSDDTYLCAPLGENPSCIQICRKHGVKYGYCYAFQCWCEYLEDKNVKI). Disulfide bonds link C40/C63, C49/C68, and C53/C70.

This sequence belongs to the long (3 C-C) scorpion toxin superfamily. Sodium/Potassium channel inhibitor family. As to expression, expressed by the venom gland.

The protein localises to the secreted. Weakly inhibits the vertebrate potassium channel Kv1.1/KCNA1. This chain is Beta-toxin KAaH2, found in Androctonus australis (Sahara scorpion).